The chain runs to 584 residues: Kelch domain-containing protein 4 (584 aa).

Over residues 1 to 10 (MGKKGKKEKK) the composition is skewed to basic residues. Disordered regions lie at residues 1-33 (MGKK…RKEE) and 50-69 (KTQV…NASL). Residues 11–24 (GRGAEKTAAKMEKK) are compositionally biased toward basic and acidic residues. Kelch repeat units lie at residues 77-129 (ELIL…VVPQ), 133-187 (QLWV…AWKR), 188-238 (QLIL…LMAV), 243-289 (SIAI…INPS), and 308-361 (QILV…RRGK). 3 disordered regions span residues 348–381 (KGPK…APEP), 405–433 (SGLG…CPRS), and 482–533 (PKSQ…EQFE). Phosphoserine is present on serine 418. Residues 443–494 (LLYVYGGMFEAGDRQVTLSDLYCLDLHKMEEWKTLVEMDPKSQEWLEESDSE) form a Kelch 6 repeat. The span at 487-519 (WLEESDSEEDSSSDEESEDGEDKDQEDSAEEGA) shows a compositional bias: acidic residues. Positions 520-533 (DPQHPEVARGEQFE) are enriched in basic and acidic residues.

The chain is Kelch domain-containing protein 4 (Klhdc4) from Mus musculus (Mouse).